The primary structure comprises 369 residues: MSLTRVSVTAVRNLHPVTLSPSPRINILYGDNGSGKTSVLEAIHLLGLARSFRSARLQPVIQYEEAACTVFGQVMLANGIASNLGISRERQGEFTIRIDGQNARSAAQLAETLPLQLINPDSFRLLEGAPKIRRQFLDWGVFHVEPRFLPVWQRLQKALRQRNSWLRHGKLDPASQAAWDRELSLASDEIDAYRRSYIQALKPVFEETLAELVSLDDLTLSYYRGWDKDRDLQDVLASSLLRDQQMGHTQAGPQRADLRIRLAGHNAAEILSRGQQKLVVCALRIAQGHLINRAKRGQCVYLVDDLPSELDEQHRMALCRLLEDLGCQVFITCVDPQLLKDGWRTDTPVAMFHVEHGKVSQTTTIGSEA.

30-37 contacts ATP; it reads GDNGSGKT.

Belongs to the RecF family.

It localises to the cytoplasm. The RecF protein is involved in DNA metabolism; it is required for DNA replication and normal SOS inducibility. RecF binds preferentially to single-stranded, linear DNA. It also seems to bind ATP. The polypeptide is DNA replication and repair protein RecF (Pseudomonas paraeruginosa (strain DSM 24068 / PA7) (Pseudomonas aeruginosa (strain PA7))).